The sequence spans 1483 residues: Heme-responsive zinc finger transcription factor HAP1 (1483 aa).

Residues 1–50 (MSNTPYNSSVPSIASMTQSSVSRSPNMHTATTPGANTSSNSPPLHMSSDS) show a composition bias toward polar residues. Residues 1–56 (MSNTPYNSSVPSIASMTQSSVSRSPNMHTATTPGANTSSNSPPLHMSSDSSKIKRK) form a disordered region. 6 residues coordinate Zn(2+): cysteine 64, cysteine 67, cysteine 74, cysteine 81, cysteine 84, and cysteine 93. A DNA-binding region (zn(2)-C6 fungal-type) is located at residues 64-93 (CTICRKRKVKCDKLRPHCQQCTKTGVAHLC). Positions 105–134 (EKELLKDNELKKLRERVKSLEKTLSKVHSS) form a coiled coil. Residues 162–176 (VNANTGSASSASHMH) are compositionally biased toward polar residues. Residues 162-208 (VNANTGSASSASHMHQQQQQQQQQEQQQDFSRSANANANSSSLSISN) are disordered. Residues 177 to 208 (QQQQQQQQQEQQQDFSRSANANANSSSLSISN) are compositionally biased toward low complexity. The heme-responsive; required for HMC formation stretch occupies residues 244–444 (KGDPYLKLLW…NTIPHHQPQS (201 aa)). 6 HRM repeats span residues 280-285 (KCPINH), 299-304 (KCPVDH), 323-328 (KCPVDH), 347-352 (RCPVDH), 389-394 (KCPVDH), and 415-420 (RCPIDH). 2 stretches are compositionally biased toward polar residues: residues 432-447 (STHN…SGSH) and 706-734 (QLNA…NPTL). 2 disordered regions span residues 432 to 458 (STHN…NRKH) and 706 to 767 (QLNA…KENQ). Over residues 735–759 (NNNMSAATTNSSSRSGSADSRSGSN) the composition is skewed to low complexity. The stretch at 1192 to 1197 (KCPVYQ) is one HRM 7 repeat. The tract at residues 1384–1411 (TANTDTSANGSALSTLTSPQGSDLASNS) is disordered. Polar residues predominate over residues 1388–1411 (DTSANGSALSTLTSPQGSDLASNS).

Binds DNA as a homodimer. Interacts with SRO9 and YDJ1. In the absence of heme, binds to at least four cellular proteins, including YDJ1 and SRO9, forming a high-molecular-weight complex (HMC) which results in repression of its activity and dictates its DNA-binding specificity.

It is found in the nucleus. Functionally, regulation of oxygen dependent gene expression. It modulates the expression of Iso-1 (CYP1) and Iso-2 (CYP3) cytochrome c. In response to heme, promotes transcription of genes encoding functions required for respiration, controlling oxidative damage and repression of anaerobic genes. Binds to the sequence 5'-CGGNNNTNNCGG-3'. In Saccharomyces cerevisiae (strain RM11-1a) (Baker's yeast), this protein is Heme-responsive zinc finger transcription factor HAP1 (HAP1).